A 102-amino-acid chain; its full sequence is Small ribosomal subunit protein bS18c (102 aa).

The span at 1 to 19 (MDKTKRPLRKSKRSFRRRL) shows a compositional bias: basic residues. Residues 1 to 26 (MDKTKRPLRKSKRSFRRRLPPPIGSG) form a disordered region.

This sequence belongs to the bacterial ribosomal protein bS18 family. In terms of assembly, part of the 30S ribosomal subunit.

The protein resides in the plastid. Its subcellular location is the chloroplast. The chain is Small ribosomal subunit protein bS18c from Piper cenocladum (Ant piper).